The following is a 355-amino-acid chain: Guanine nucleotide-binding protein alpha-12 subunit (355 aa).

The G-alpha domain maps to 28-355; it reads RQINLLLLGS…EQNLKTLMMQ (328 aa). The segment at 31–44 is G1 motif; it reads NLLLLGSGESGKST. Residues 36–43, 176–182, 201–205, 270–273, and A327 each bind GTP; these read GSGESGKS, LFCRKAT, DVGGQ, and NKND. Residues S43 and T182 each coordinate Mg(2+). A G2 motif region spans residues 174–182; the sequence is DILFCRKAT. A G3 motif region spans residues 197–206; it reads FRFIDVGGQR. Residues 266–273 form a G4 motif region; sequence ILFMNKND. Residues 325–330 form a G5 motif region; the sequence is TTAVDT.

This sequence belongs to the G-alpha family. As to quaternary structure, g proteins are composed of 3 units; alpha, beta and gamma. The alpha chain contains the guanine nucleotide binding site.

Functionally, guanine nucleotide-binding proteins (G proteins) are involved as modulators or transducers in various transmembrane signaling systems. May play a role in resistance to fungal infection in the epidermis by regulating the up-regulation of several antimicrobial peptides of the NLP and CNC families. Upstream of plc-3, egl-8, tpa-1 and the p38-like pathway, required for the expression of antimicrobial peptide nlp-29 in the epidermis in response to fungal infection or physical injury. This is Guanine nucleotide-binding protein alpha-12 subunit (gpa-12) from Caenorhabditis briggsae.